We begin with the raw amino-acid sequence, 186 residues long: Elongation factor P (186 aa).

Belongs to the elongation factor P family.

It is found in the cytoplasm. The protein operates within protein biosynthesis; polypeptide chain elongation. In terms of biological role, involved in peptide bond synthesis. Stimulates efficient translation and peptide-bond synthesis on native or reconstituted 70S ribosomes in vitro. Probably functions indirectly by altering the affinity of the ribosome for aminoacyl-tRNA, thus increasing their reactivity as acceptors for peptidyl transferase. This is Elongation factor P from Streptococcus mutans serotype c (strain ATCC 700610 / UA159).